Here is a 160-residue protein sequence, read N- to C-terminus: Ribosomal RNA large subunit methyltransferase H (160 aa).

S-adenosyl-L-methionine is bound by residues leucine 76, glycine 108, and 127–132 (FGALTW).

This sequence belongs to the RNA methyltransferase RlmH family. In terms of assembly, homodimer.

The protein resides in the cytoplasm. The catalysed reaction is pseudouridine(1915) in 23S rRNA + S-adenosyl-L-methionine = N(3)-methylpseudouridine(1915) in 23S rRNA + S-adenosyl-L-homocysteine + H(+). In terms of biological role, specifically methylates the pseudouridine at position 1915 (m3Psi1915) in 23S rRNA. This Mesorhizobium japonicum (strain LMG 29417 / CECT 9101 / MAFF 303099) (Mesorhizobium loti (strain MAFF 303099)) protein is Ribosomal RNA large subunit methyltransferase H.